The primary structure comprises 515 residues: 1-pyrroline-5-carboxylate dehydrogenase (515 aa).

Catalysis depends on residues Glu-286 and Cys-320.

The protein belongs to the aldehyde dehydrogenase family. RocA subfamily.

The catalysed reaction is L-glutamate 5-semialdehyde + NAD(+) + H2O = L-glutamate + NADH + 2 H(+). Its pathway is amino-acid degradation; L-proline degradation into L-glutamate; L-glutamate from L-proline: step 2/2. This Anoxybacillus flavithermus (strain DSM 21510 / WK1) protein is 1-pyrroline-5-carboxylate dehydrogenase.